Reading from the N-terminus, the 76-residue chain is Putative snRNP Sm-like protein (76 aa).

Residues 4 to 76 enclose the Sm domain; sequence RPLDVIHKSL…VLALSPVELE (73 aa).

It belongs to the snRNP Sm proteins family.

This chain is Putative snRNP Sm-like protein, found in Thermococcus kodakarensis (strain ATCC BAA-918 / JCM 12380 / KOD1) (Pyrococcus kodakaraensis (strain KOD1)).